Reading from the N-terminus, the 266-residue chain is Apolipoprotein A-I (266 aa).

The first 18 residues, 1 to 18, serve as a signal peptide directing secretion; the sequence is MKAVVLTLAVLFLTGSQA. 2 tandem repeats follow at residues 67–88 and 89–110. The 10 X approximate tandem repeats stretch occupies residues 67 to 266; the sequence is LKLLDNWDTL…DEATKKLNAQ (200 aa). At Met109 the chain carries Methionine sulfoxide. Residues 111-121 form a 3; half-length repeat; it reads KDLEEVKKKVQ. 5 consecutive repeat copies span residues 122–143, 144–165, 166–187, 188–209, and 210–231. Residues 232–242 form a 9; half-length repeat; the sequence is PALEDLRQGLL. Repeat unit 10 spans residues 243–266; the sequence is PVLESFRTSLLAAVDEATKKLNAQ.

Belongs to the apolipoprotein A1/A4/E family. In terms of assembly, homodimer. Interacts with APOA1BP and CLU. Component of a sperm activating protein complex (SPAP), consisting of APOA1, an immunoglobulin heavy chain, an immunoglobulin light chain and albumin. Interacts with NDRG1. Interacts with SCGB3A2. Interacts with NAXE and YJEFN3. Post-translationally, glycosylated. In terms of processing, palmitoylated. Phosphorylation sites are present in the extracellular medium.

Its subcellular location is the secreted. Its function is as follows. Participates in the reverse transport of cholesterol from tissues to the liver for excretion by promoting cholesterol efflux from tissues and by acting as a cofactor for the lecithin cholesterol acyltransferase (LCAT). As part of the SPAP complex, activates spermatozoa motility. This Odobenus rosmarus divergens (Pacific walrus) protein is Apolipoprotein A-I (APOA1).